The primary structure comprises 754 residues: ToMV resistance protein Tm-1(GCR237) (754 aa).

Residues 1–201 (MATAQSNSPR…AGMVIGRLES (201 aa)) are N-terminal inhibitory domain NN. ATP contacts are provided by residues 18-20 (DTK), Thr55, Arg92, and 124-127 (GSGG). The interval 211 to 431 (KFTVGVTMFG…VDSFLEISPK (221 aa)) is N-terminal inhibitory domain NC.

The protein belongs to the UPF0261 family. Homodimer. In terms of assembly, (Microbial infection) Binds, via an ATP bridge, to the tobamoviruses avirulent (Avr) replication proteins (large and small subunits, e.g. tomato mosaic virus (ToMV/TMV) AC P03587, tobacco mild green mosaic virus (TMGMV) AC P18339 and pepper mild mottle virus (PMMoV) AC P89657) to inhibit their function after the translation of tobamoviruses RNA, but before the viral replication complex formation on the membrane surfaces; this interaction is not possible with resistance-breaking strains replication proteins.

Its function is as follows. Inhibitor of viral RNA replication which confers resistance to some tobamoviruses including tomato mosaic virus (ToMV) (e.g. isolate L), tobacco mosaic virus (TMV), tobacco mild green mosaic virus (TMGMV) and pepper mild mottle virus (PMMoV), but not to resistance-breaking isolates of ToMV (e.g. LT1, SL-1 and ToMV1-2) and tomato brown rugose fruit virus (ToBRFV). Prevents tobamoviruses RNA replication by affecting the association of tobamoviruses replication proteins (large and small subunits) with host membrane-associated proteins (e.g. TOM1, TOM2A and ARL8), thus inhibiting the replication complex formation on the membranes and avoiding viral negative-strand RNA synthesis. Inhibits triphosphatase activity of ToMV replication proteins. The chain is ToMV resistance protein Tm-1(GCR237) from Solanum lycopersicum (Tomato).